Here is a 222-residue protein sequence, read N- to C-terminus: Ribosome maturation factor RimM (222 aa).

Residues 1 to 22 are disordered; it reads MTERKQGAARPLNRPLVQPQGE. Residues 145-222 enclose the PRC barrel domain; sequence EDEFYWVDLI…RIVVDWGLDY (78 aa).

Belongs to the RimM family. Binds ribosomal protein uS19.

It is found in the cytoplasm. In terms of biological role, an accessory protein needed during the final step in the assembly of 30S ribosomal subunit, possibly for assembly of the head region. Essential for efficient processing of 16S rRNA. May be needed both before and after RbfA during the maturation of 16S rRNA. It has affinity for free ribosomal 30S subunits but not for 70S ribosomes. In Cupriavidus necator (strain ATCC 17699 / DSM 428 / KCTC 22496 / NCIMB 10442 / H16 / Stanier 337) (Ralstonia eutropha), this protein is Ribosome maturation factor RimM.